The sequence spans 383 residues: Probable aspartate/prephenate aminotransferase (383 aa).

Positions 39, 125, and 175 each coordinate L-aspartate. An N6-(pyridoxal phosphate)lysine modification is found at Lys234. Arg361 contributes to the L-aspartate binding site.

This sequence belongs to the class-I pyridoxal-phosphate-dependent aminotransferase family. In terms of assembly, homodimer. The cofactor is pyridoxal 5'-phosphate.

The protein localises to the cytoplasm. The enzyme catalyses L-aspartate + 2-oxoglutarate = oxaloacetate + L-glutamate. It catalyses the reaction L-arogenate + oxaloacetate = prephenate + L-aspartate. Its function is as follows. Catalyzes the reversible conversion of aspartate and 2-oxoglutarate to glutamate and oxaloacetate. Can also transaminate prephenate in the presence of aspartate. The chain is Probable aspartate/prephenate aminotransferase (aspC) from Thermus aquaticus.